The primary structure comprises 266 residues: Putative carbamate hydrolase RutD (266 aa).

Residues 14–115 form the AB hydrolase-1 domain; that stretch reads PVVVLISGLG…TMLVSVNGWL (102 aa).

It belongs to the AB hydrolase superfamily. Hydrolase RutD family.

The catalysed reaction is carbamate + 2 H(+) = NH4(+) + CO2. Involved in pyrimidine catabolism. May facilitate the hydrolysis of carbamate, a reaction that can also occur spontaneously. In Shigella flexneri serotype X (strain 2002017), this protein is Putative carbamate hydrolase RutD.